A 380-amino-acid chain; its full sequence is Crotonobetainyl-CoA reductase (380 aa).

The protein belongs to the acyl-CoA dehydrogenase family. Homotetramer. FAD is required as a cofactor.

The protein localises to the cytoplasm. It catalyses the reaction 4-(trimethylamino)butanoyl-CoA + oxidized [electron-transfer flavoprotein] + H(+) = crotonobetainyl-CoA + reduced [electron-transfer flavoprotein]. It functions in the pathway amine and polyamine metabolism; carnitine metabolism. Catalyzes the reduction of crotonobetainyl-CoA to gamma-butyrobetainyl-CoA. The polypeptide is Crotonobetainyl-CoA reductase (Escherichia coli O6:K15:H31 (strain 536 / UPEC)).